Consider the following 379-residue polypeptide: Dihydroflavonol 4-reductase (379 aa).

The NADP(+) site is built by Lys-56 and Tyr-175.

This sequence belongs to the NAD(P)-dependent epimerase/dehydratase family. Dihydroflavonol-4-reductase subfamily. As to expression, expressed in both leaf and hypocotyl tissues.

The catalysed reaction is a (2R,3S,4S)-leucoanthocyanidin + NADP(+) = a (2R,3R)-dihydroflavonol + NADPH + H(+). It catalyses the reaction (2S)-flavan-4-ol + NADP(+) = (2S)-flavanone + NADPH + H(+). It functions in the pathway pigment biosynthesis; anthocyanin biosynthesis. Functionally, bifunctional enzyme involved in flavonoid metabolism. The sequence is that of Dihydroflavonol 4-reductase from Solanum lycopersicum (Tomato).